The sequence spans 1279 residues: Cellulose synthase operon protein C (1279 aa).

The first 21 residues, 1–21 (MRRHTLAIAILAALASTASVA), serve as a signal peptide directing secretion. TPR repeat units lie at residues 27 to 60 (QSLLIEQGYYWQSKKNPERALETWQKLLRLSPDQ), 62 to 94 (DALYGIGLIQVQQNHPAEAQKYLARLQALSPVP), 218 to 250 (ADETWRFALVWLGPPKPDQVSLFQQFLTVHPDD), 306 to 339 (VDALGGMGVLRQQQERYSEAENYLVQATRLPGGA), 384 to 417 (PGAAIALAGFQAQDNQFDDAEAGYRKVLARHPGD), 460 to 493 (ALRATQVGKLAEQRGDLKAAQAAYRQALDADPEN), 495 to 527 (WTRFALARMYLRDGQIRNARALIDGLLKSQPNQ), 606 to 639 (PERVAVLAAAYVEVGAAQYGLDMMQKVVENNPNP), 719 to 752 (ALGVGALARMYAASGNGKKAMELYAPLIQQNPNN), and 787 to 820 (PEILTSAARIYQGLGKNSEAAELLRKALAIENAM).

The protein operates within glycan metabolism; bacterial cellulose biosynthesis. In terms of biological role, required for maximal bacterial cellulose synthesis. This chain is Cellulose synthase operon protein C (bscS), found in Pseudomonas fluorescens (strain SBW25).